We begin with the raw amino-acid sequence, 98 residues long: Large ribosomal subunit protein uL23 (98 aa).

This sequence belongs to the universal ribosomal protein uL23 family. In terms of assembly, part of the 50S ribosomal subunit. Contacts protein L29, and trigger factor when it is bound to the ribosome.

One of the early assembly proteins it binds 23S rRNA. One of the proteins that surrounds the polypeptide exit tunnel on the outside of the ribosome. Forms the main docking site for trigger factor binding to the ribosome. This is Large ribosomal subunit protein uL23 from Ruegeria sp. (strain TM1040) (Silicibacter sp.).